Consider the following 591-residue polypeptide: Probable metalloprotease ARX1 (591 aa).

This sequence belongs to the peptidase M24 family. As to quaternary structure, component of the nucleoplasmic and cytoplasmic pre-60S ribosomal particles.

Its subcellular location is the cytoplasm. It is found in the nucleus. Probable metalloprotease involved in proper assembly of pre-ribosomal particles during the biogenesis of the 60S ribosomal subunit. Accompanies the pre-60S particles to the cytoplasm. This chain is Probable metalloprotease ARX1 (ARX1), found in Eremothecium gossypii (strain ATCC 10895 / CBS 109.51 / FGSC 9923 / NRRL Y-1056) (Yeast).